The chain runs to 121 residues: Large ribosomal subunit protein bL20 (121 aa).

This sequence belongs to the bacterial ribosomal protein bL20 family.

Its function is as follows. Binds directly to 23S ribosomal RNA and is necessary for the in vitro assembly process of the 50S ribosomal subunit. It is not involved in the protein synthesizing functions of that subunit. The sequence is that of Large ribosomal subunit protein bL20 from Mycoplasma mycoides subsp. mycoides SC (strain CCUG 32753 / NCTC 10114 / PG1).